The chain runs to 275 residues: 2,3,4,5-tetrahydropyridine-2,6-dicarboxylate N-succinyltransferase (275 aa).

Substrate-binding residues include Arg104 and Asp141.

The protein belongs to the transferase hexapeptide repeat family. As to quaternary structure, homotrimer.

The protein localises to the cytoplasm. It catalyses the reaction (S)-2,3,4,5-tetrahydrodipicolinate + succinyl-CoA + H2O = (S)-2-succinylamino-6-oxoheptanedioate + CoA. Its pathway is amino-acid biosynthesis; L-lysine biosynthesis via DAP pathway; LL-2,6-diaminopimelate from (S)-tetrahydrodipicolinate (succinylase route): step 1/3. In Actinobacillus succinogenes (strain ATCC 55618 / DSM 22257 / CCUG 43843 / 130Z), this protein is 2,3,4,5-tetrahydropyridine-2,6-dicarboxylate N-succinyltransferase.